The sequence spans 84 residues: Small ribosomal subunit protein uS17c (84 aa).

The protein belongs to the universal ribosomal protein uS17 family. Part of the 30S ribosomal subunit.

The protein localises to the plastid. Its subcellular location is the chloroplast. In terms of biological role, one of the primary rRNA binding proteins, it binds specifically to the 5'-end of 16S ribosomal RNA. This Phaeodactylum tricornutum (strain CCAP 1055/1) protein is Small ribosomal subunit protein uS17c (rps17).